A 639-amino-acid chain; its full sequence is Polypeptide N-acetylgalactosaminyltransferase 15 (639 aa).

Topologically, residues 1–11 (MLLRKRYRHRP) are cytoplasmic. Residues 12–34 (CRLQFLLLLLMLGCVLMMVAMLH) form a helical; Signal-anchor for type II membrane protein membrane-spanning segment. Residues 35-639 (PPHHTLHQTV…FDQINAVDER (605 aa)) are Lumenal-facing. The tract at residues 106-155 (RNQSQGRRGGSYRLIKQPRRQDKEAPKRDWGADEDGEVSEEEELTPFSLD) is disordered. Residue Asn-107 is glycosylated (N-linked (GlcNAc...) asparagine). The segment covering 124–136 (RRQDKEAPKRDWG) has biased composition (basic and acidic residues). Over residues 137-149 (ADEDGEVSEEEEL) the composition is skewed to acidic residues. 5 cysteine pairs are disulfide-bonded: Cys-181-Cys-412, Cys-403-Cys-482, Cys-517-Cys-536, Cys-562-Cys-575, and Cys-603-Cys-620. The tract at residues 190-299 (LPTASVILCF…PGWLEPLLSR (110 aa)) is catalytic subdomain A. Positions 231 and 260 each coordinate substrate. Mn(2+) is bound by residues Asp-283, His-285, and His-417. The tract at residues 358-420 (PIRSPVVPGE…PCSRVGHIYQ (63 aa)) is catalytic subdomain B. The region spanning 504-631 (SFSGKLHNTG…GKARQQWRFD (128 aa)) is the Ricin B-type lectin domain. The N-linked (GlcNAc...) asparagine glycan is linked to Asn-574.

Belongs to the glycosyltransferase 2 family. GalNAc-T subfamily. The cofactor is Mn(2+). Widely expressed. Highly expressed in small intestine, placenta, spleen, cerebral cortex and ovary. Expressed at intermediate level in uterus, mammary gland, stomach, cerebellum and whole brain. Weakly expressed in fetal brain, bone marrow, thyroid gland, thymus, heart, skeletal muscle, lung, liver, colon, pancreas, kidney and testis. Not expressed in leukocyte. Expressed in both normal and osteoarthritic cartilage. Expressed at low level in chondrocytes in all zones of both normal and osteoarthritic cartilage.

It is found in the golgi apparatus membrane. It carries out the reaction L-seryl-[protein] + UDP-N-acetyl-alpha-D-galactosamine = a 3-O-[N-acetyl-alpha-D-galactosaminyl]-L-seryl-[protein] + UDP + H(+). It catalyses the reaction L-threonyl-[protein] + UDP-N-acetyl-alpha-D-galactosamine = a 3-O-[N-acetyl-alpha-D-galactosaminyl]-L-threonyl-[protein] + UDP + H(+). It participates in protein modification; protein glycosylation. Catalyzes the initial reaction in O-linked oligosaccharide biosynthesis, the transfer of an N-acetyl-D-galactosamine residue to a serine or threonine residue on the protein receptor. Although it displays a much weaker activity toward all substrates tested compared to GALNT2, it is able to transfer up to seven GalNAc residues to the Muc5AC peptide, suggesting that it can fill vicinal Thr/Ser residues in cooperation with other GALNT proteins. Prefers Muc1a as substrate. In Homo sapiens (Human), this protein is Polypeptide N-acetylgalactosaminyltransferase 15 (GALNT15).